A 54-amino-acid chain; its full sequence is Apelin receptor early endogenous ligand (54 aa).

A signal peptide spans 1-22 (MRFQQFLFAFFIFIMSLLLISG). The N-linked (GlcNAc...) asparagine glycan is linked to Asn27.

Belongs to the Elabela/Toddler family. In terms of assembly, interacts with APLNR. In terms of tissue distribution, expressed in the intima of blood vessels. Expressed in endothelial cells in blood vessels in the heart and lung. Expressed in cytotrophoblasts and syncytiotrophoblasts of first-trimester placental tissue and term placentas (at protein level). Not detected in smooth muscle cells or cardiomyocytes (at protein level). Expressed in kidney. Expressed in blood vessels. Expressed in embryonic (ESCs) and induced (iPSCs) pluripotent stem cells. Most highly expressed in undifferentiated embryonic stem cell and is rapidly down-regulated during differentiation.

Its subcellular location is the secreted. It is found in the extracellular space. In terms of biological role, peptide hormone that functions as endogenous ligand for the G-protein-coupled apelin receptor (APLNR/APJ), that plays a role in the regulation of normal cardiovascular function and fluid homeostasis. Functions as a balanced agonist activating both G(i) protein pathway and beta-arrestin pathway of APLNR. Downstream G proteins activation, apelin can inhibit cAMP production and activate key intracellular effectors such as ERKs. On the other hand, APLNR activation induces beta-arrestin recruitment to the membrane leading to desensitization and internalization of the receptor. Required for mesendodermal differentiation, blood vessels formation and heart morphogenesis during early development and for adult cardiovascular homeostasis. Acts as a motogen by promoting mesendodermal cell migration during gastrulation by binding and activating APLNR. Acts as an early embryonic regulator of cellular movement with a role in migration and development of cardiac progenitor cells. May act as a chemoattractant for the activation of angioblast migration toward the embryonic midline, i.e. the position of the future vessel formation, during vasculogenesis. Positively regulates sinus venosus (SV)-derived endothelial cells migration into the developing heart to promote coronary blood vessel sprouting. Plays a role in placental vascular development; promotes placental trophoblast invasion and spiral artery remodeling in the uterus. Involved in the regulation of maternal cardiovascular homeostasis to prevent gestational hypertension and for potent cardioprotective functions during heart failure. Mediates myocardial contractility in an ERK1/2-dependent manner. This is Apelin receptor early endogenous ligand from Homo sapiens (Human).